We begin with the raw amino-acid sequence, 278 residues long: uncharacterized protein (278 aa).

The Cytoplasmic segment spans residues 1–34; it reads MAKTIKVIRKKDPKKKNLSDPLAKQKLVWKIGHV. Residues 35–55 traverse the membrane as a helical segment; the sequence is LTLVFGLLFSITYFYHVLIFF. Residues 56–129 are Extracellular-facing; sequence KYRSWKWLFL…DLLSSENFHT (74 aa). A helical membrane pass occupies residues 130–150; sequence LLIACLWFFGGGKSFYKILPY. The Cytoplasmic portion of the chain corresponds to 151-180; that stretch reads MILSYLHLTKMNYELNANKEEKIPLTPKDR. Residues 181–201 form a helical membrane-spanning segment; sequence KMLHLLAYSELLVILALTLDT. Residues 202 to 205 lie on the Extracellular side of the membrane; the sequence is ILFK. Residues 206-222 form a helical membrane-spanning segment; that stretch reads TGTSGFMLVIYVGIYWL. Residues 223–278 are Cytoplasmic-facing; that stretch reads RLNFSPYAQVAVLELLVKFEKYVPKKYRDKWQVIKNFIYMKMKEHEKRTEEVARYA.

It localises to the cell membrane. This is an uncharacterized protein from Saccharomyces cerevisiae (strain ATCC 204508 / S288c) (Baker's yeast).